A 688-amino-acid polypeptide reads, in one-letter code: Translation initiation factor IF-2 (688 aa).

Composition is skewed to basic and acidic residues over residues 53–62 (GKEKSEKTKE) and 86–95 (KRDDKNEKVN). A disordered region spans residues 53 to 100 (GKEKSEKTKEEDDEIETTAKNPIKESMNNKKSNKRDDKNEKVNTENAE). The tr-type G domain occupies 187–354 (KRSPIITVMG…MILLSSEILE (168 aa)). The interval 196–203 (GHVDHGKT) is G1. 196 to 203 (GHVDHGKT) contributes to the GTP binding site. Residues 221 to 225 (GITQH) form a G2 region. The interval 242 to 245 (DTPG) is G3. Residues 242–246 (DTPGH) and 296–299 (NKID) each bind GTP. A G4 region spans residues 296-299 (NKID). Positions 332 to 334 (SAH) are G5.

Belongs to the TRAFAC class translation factor GTPase superfamily. Classic translation factor GTPase family. IF-2 subfamily.

Its subcellular location is the cytoplasm. One of the essential components for the initiation of protein synthesis. Protects formylmethionyl-tRNA from spontaneous hydrolysis and promotes its binding to the 30S ribosomal subunits. Also involved in the hydrolysis of GTP during the formation of the 70S ribosomal complex. The protein is Translation initiation factor IF-2 of Clostridium botulinum (strain ATCC 19397 / Type A).